A 777-amino-acid chain; its full sequence is Subtilisin-like protease SBT1.4 (777 aa).

A signal peptide spans 1–25; it reads MAKLSLSSIFFVFPLLLCFFSPSSS. Residues 26 to 110 constitute a propeptide, activation peptide; sequence SSDGLESYIV…VIPDQAREIH (85 aa). One can recognise an Inhibitor I9 domain in the interval 32–110; it reads SYIVHVQRSH…VIPDQAREIH (79 aa). Positions 115–614 constitute a Peptidase S8 domain; that stretch reads PAFLGFSQNS…AGHVDPNKAL (500 aa). Residue D142 is the Charge relay system of the active site. The N-linked (GlcNAc...) asparagine glycan is linked to N198. Residues 199-223 are disordered; it reads GTKKHAAKESRSPRDTEGHGTHTAS. A compositionally biased stretch (basic and acidic residues) spans 205–218; the sequence is AKESRSPRDTEGHG. H217 serves as the catalytic Charge relay system. N-linked (GlcNAc...) asparagine glycans are attached at residues N232 and N395. The region spanning 376 to 461 is the PA domain; sequence LSLVYSGDCG…VGAKAGDQIR (86 aa). S546 serves as the catalytic Charge relay system.

This sequence belongs to the peptidase S8 family.

It localises to the secreted. The chain is Subtilisin-like protease SBT1.4 from Arabidopsis thaliana (Mouse-ear cress).